The primary structure comprises 545 residues: Chaperonin GroEL (545 aa).

Residues 29-32 (TLGP), Lys50, 86-90 (DGTTT), Gly415, and Asp495 contribute to the ATP site.

The protein belongs to the chaperonin (HSP60) family. Forms a cylinder of 14 subunits composed of two heptameric rings stacked back-to-back. Interacts with the co-chaperonin GroES.

The protein resides in the cytoplasm. The enzyme catalyses ATP + H2O + a folded polypeptide = ADP + phosphate + an unfolded polypeptide.. Its function is as follows. Together with its co-chaperonin GroES, plays an essential role in assisting protein folding. The GroEL-GroES system forms a nano-cage that allows encapsulation of the non-native substrate proteins and provides a physical environment optimized to promote and accelerate protein folding. The sequence is that of Chaperonin GroEL from Porphyromonas gingivalis (strain ATCC BAA-308 / W83).